The primary structure comprises 421 residues: Core-capsid bridging protein (421 aa).

This sequence belongs to the adenoviridae core-capsid bridging protein family. As to quaternary structure, monomer. Homodimer. Exists in equilibrium between monomers and dimers in solution. Interacts with the histone-like nucleoprotein; this interactions bridge the virus core to the capsid. Interacts with core protein X; this interactions bridge the virus core to the capsid. Interacts with the endosome lysis protein VI; this interactions bridge the virus core to the capsid. Interacts with the peripentonal hexons. Interacts with host NPM1; this interaction might play a role in virus assembly.

Its subcellular location is the virion. The protein localises to the host nucleus. The protein resides in the host nucleolus. Associates loosely with the viral DNA to form an outer shell around the nucleoprotein-DNA complex and links it with the capsid by binding the endosome lysis protein. Dissociates from the viral genome during entry. Might be involved in nuclear capsid assembly of the viral particles through its association with NPM1/nucleophosmin. In Canine adenovirus serotype 1 (strain CLL) (CAdV-1), this protein is Core-capsid bridging protein.